We begin with the raw amino-acid sequence, 193 residues long: Ion-translocating oxidoreductase complex subunit A (193 aa).

The next 6 helical transmembrane spans lie at leucine 5 to leucine 25, methionine 39 to isoleucine 59, isoleucine 63 to valine 83, leucine 102 to leucine 122, alanine 134 to isoleucine 154, and alanine 171 to valine 191.

This sequence belongs to the NqrDE/RnfAE family. In terms of assembly, the complex is composed of six subunits: RsxA, RsxB, RsxC, RsxD, RsxE and RsxG.

It localises to the cell inner membrane. In terms of biological role, part of a membrane-bound complex that couples electron transfer with translocation of ions across the membrane. Required to maintain the reduced state of SoxR. The chain is Ion-translocating oxidoreductase complex subunit A from Shigella boydii serotype 18 (strain CDC 3083-94 / BS512).